Reading from the N-terminus, the 95-residue chain is Aspartyl/glutamyl-tRNA(Asn/Gln) amidotransferase subunit C (95 aa).

The protein belongs to the GatC family. In terms of assembly, heterotrimer of A, B and C subunits.

It catalyses the reaction L-glutamyl-tRNA(Gln) + L-glutamine + ATP + H2O = L-glutaminyl-tRNA(Gln) + L-glutamate + ADP + phosphate + H(+). The enzyme catalyses L-aspartyl-tRNA(Asn) + L-glutamine + ATP + H2O = L-asparaginyl-tRNA(Asn) + L-glutamate + ADP + phosphate + 2 H(+). Functionally, allows the formation of correctly charged Asn-tRNA(Asn) or Gln-tRNA(Gln) through the transamidation of misacylated Asp-tRNA(Asn) or Glu-tRNA(Gln) in organisms which lack either or both of asparaginyl-tRNA or glutaminyl-tRNA synthetases. The reaction takes place in the presence of glutamine and ATP through an activated phospho-Asp-tRNA(Asn) or phospho-Glu-tRNA(Gln). The chain is Aspartyl/glutamyl-tRNA(Asn/Gln) amidotransferase subunit C from Dechloromonas aromatica (strain RCB).